Consider the following 146-residue polypeptide: MKLHELKPSEGSRKTRNRVGRGIGSGNGKTAGKGHKGQNARSGGGVRPGFEGGQMPLFQRLPKRGFTNINRKEYAVVNLDKLNGFAEGTEVTPELLLETGVISKLNAGVKILGNGKLEKKLTVKANKFSASAKEAVEAAGGTAEVI.

Residues 1-13 show a composition bias toward basic and acidic residues; that stretch reads MKLHELKPSEGSR. The disordered stretch occupies residues 1-57; sequence MKLHELKPSEGSRKTRNRVGRGIGSGNGKTAGKGHKGQNARSGGGVRPGFEGGQMPL. Gly residues-rich tracts occupy residues 21 to 31 and 42 to 52; these read RGIGSGNGKTA and SGGGVRPGFEG.

Belongs to the universal ribosomal protein uL15 family. In terms of assembly, part of the 50S ribosomal subunit.

Binds to the 23S rRNA. The protein is Large ribosomal subunit protein uL15 of Bacillus subtilis (strain 168).